The primary structure comprises 931 residues: Protein unc-45 homolog B (931 aa).

TPR repeat units lie at residues 6–39, 43–76, and 77–110; these read AVQL…TKDK, ATLY…NSSD, and IKAL…EPRN. 3 ARM repeats span residues 169 to 208, 211 to 250, and 751 to 790; these read EAGA…GMCS, QARA…AIID, and DKLR…NMVL.

As to quaternary structure, interacts with HSP90 in an ATP-independent manner. Interacts with UBE4B; the interaction may target UNC45B for proteasomal degradation. In terms of tissue distribution, expressed in eye lens tissues. Expressed in muscle (at protein level).

The protein localises to the cytoplasm. Its subcellular location is the myofibril. It is found in the sarcomere. It localises to the z line. The protein resides in the a band. The protein localises to the perinuclear region. Its subcellular location is the cytosol. Its function is as follows. Acts as a co-chaperone for HSP90 and is required for proper folding of the myosin motor domain. Plays a role in sarcomere formation during muscle cell development. Is necessary for normal early lens development. The chain is Protein unc-45 homolog B from Homo sapiens (Human).